The following is a 79-amino-acid chain: U-actitoxin-Bgr3d (79 aa).

An N-terminal signal peptide occupies residues 1 to 21 (MSYERLLCLVLVASFIAASVA). The propeptide occupies 22 to 38 (QHPGDAPRMEDDSSAIQ). 3 disulfide bridges follow: C44–C76, C46–C69, and C59–C77.

This sequence belongs to the sea anemone type 3 (BDS) potassium channel toxin family.

It is found in the secreted. The protein localises to the nematocyst. In terms of biological role, potently and selectively inhibits voltage-gated potassium channels Kv11/KCNH/ERG. Acts as a gating-modifier toxin that shifts the voltage-dependence of ERG activation in the positive direction and suppresses its current amplitudes elicited by strong depolarizing pulses that maximally activate the channels. This is U-actitoxin-Bgr3d from Bunodosoma granuliferum (Red warty sea anemone).